Here is a 917-residue protein sequence, read N- to C-terminus: Transcriptional regulatory protein SEF1 (917 aa).

Residues 1-88 (MKFEKGKVRI…SKPTGHRPVT (88 aa)) form a disordered region. A compositionally biased stretch (pro residues) spans 13-27 (KPSPTPTNPQTPLPL). The span at 56–70 (SNSTASTPNSATPTS) shows a compositional bias: low complexity. Polar residues predominate over residues 71 to 81 (VGTPPQKTSKP). Residues 90–120 (CTFCRQHKIKCNASDNYPNPCERCKKMGLKC) constitute a DNA-binding region (zn(2)-C6 fungal-type). A coiled-coil region spans residues 129–164 (RKGSQIQSLKSDVDELKAKIEMLTKNESLLTQALNQ). 2 disordered regions span residues 168-212 (NHAS…ASPI) and 778-849 (QQYP…PFIL). Low complexity predominate over residues 171-184 (SQQQQSSGSQSQQQ). A compositionally biased stretch (polar residues) spans 191–212 (RALSYTSANSSPQVAFSNASPI). Residues 778–827 (QQYPMQQDQQQQEPSQQQQQKHSQQSQQYQQQQQSNQQQPHLQHQRQFQQ) show a composition bias toward low complexity.

Interacts with SSN3 and SFU1. Phosphorylated by SSN3 under iron-depleted conditions which leads to nuclear localization.

It localises to the cytoplasm. Its subcellular location is the nucleus. Its function is as follows. Transcription factor which plays an essential role in virulence by activating the transcription of iron uptake genes such as FRE7 in iron-poor environments such as the host bloodstream and internal organs. Promotes commensalism in a mouse model of gastrointestinal infection. This is Transcriptional regulatory protein SEF1 (SEF1) from Candida albicans (strain SC5314 / ATCC MYA-2876) (Yeast).